Reading from the N-terminus, the 182-residue chain is NADH-quinone oxidoreductase subunit B (182 aa).

[4Fe-4S] cluster is bound by residues Cys47, Cys48, Cys113, and Cys142.

This sequence belongs to the complex I 20 kDa subunit family. As to quaternary structure, NDH-1 is composed of 14 different subunits. Subunits NuoB, C, D, E, F, and G constitute the peripheral sector of the complex. The cofactor is [4Fe-4S] cluster.

The protein resides in the cell inner membrane. The enzyme catalyses a quinone + NADH + 5 H(+)(in) = a quinol + NAD(+) + 4 H(+)(out). In terms of biological role, NDH-1 shuttles electrons from NADH, via FMN and iron-sulfur (Fe-S) centers, to quinones in the respiratory chain. The immediate electron acceptor for the enzyme in this species is believed to be ubiquinone. Couples the redox reaction to proton translocation (for every two electrons transferred, four hydrogen ions are translocated across the cytoplasmic membrane), and thus conserves the redox energy in a proton gradient. The chain is NADH-quinone oxidoreductase subunit B from Anaeromyxobacter dehalogenans (strain 2CP-1 / ATCC BAA-258).